Reading from the N-terminus, the 289-residue chain is Inorganic pyrophosphatase (289 aa).

Residue S2 is modified to N-acetylserine. K57 is subject to N6-acetyllysine. D116, D121, and D153 together coordinate Mg(2+). S250 carries the post-translational modification Phosphoserine.

Belongs to the PPase family. In terms of assembly, homodimer. Mg(2+) serves as cofactor. The N-terminus is blocked. Highest levels are found in retinal rod outer segments.

The protein resides in the cytoplasm. The enzyme catalyses diphosphate + H2O = 2 phosphate + H(+). In Bos taurus (Bovine), this protein is Inorganic pyrophosphatase (PPA1).